The sequence spans 261 residues: Anamorsin homolog (261 aa).

An N-terminal SAM-like domain region spans residues 4 to 134 (VQENNQVLYI…EIGSAAKLSL (131 aa)). Positions 134-173 (LGGGANKAKVAAVWKLDVDDDGEAEERIDEDELLDEEDKV) are linker. [2Fe-2S] cluster contacts are provided by C183, C192, C195, and C197. The interval 183 to 197 (CGTTGKRKACKDCSC) is fe-S binding site A. C222, C225, C233, and C236 together coordinate [4Fe-4S] cluster. 2 short sequence motifs (cx2C motif) span residues 222 to 225 (CGSC) and 233 to 236 (CATC). The segment at 222–236 (CGSCYLGDAFRCATC) is fe-S binding site B.

Belongs to the anamorsin family. In terms of assembly, monomer. [2Fe-2S] cluster serves as cofactor. The cofactor is [4Fe-4S] cluster.

The protein resides in the cytoplasm. Its subcellular location is the mitochondrion intermembrane space. Functionally, component of the cytosolic iron-sulfur (Fe-S) protein assembly (CIA) machinery. Required for the maturation of extramitochondrial Fe-S proteins. Part of an electron transfer chain functioning in an early step of cytosolic Fe-S biogenesis, facilitating the de novo assembly of a [4Fe-4S] cluster on the cytosolic Fe-S scaffold complex. Electrons are transferred from NADPH via a FAD- and FMN-containing diflavin oxidoreductase. Together with the diflavin oxidoreductase, also required for the assembly of the diferric tyrosyl radical cofactor of ribonucleotide reductase (RNR), probably by providing electrons for reduction during radical cofactor maturation in the catalytic small subunit. The sequence is that of Anamorsin homolog from Culex quinquefasciatus (Southern house mosquito).